A 288-amino-acid chain; its full sequence is Tryptophan 2,3-dioxygenase (288 aa).

Substrate contacts are provided by residues 57-61, Tyr119, and Arg123; that span reads FIIQH. A heme-binding site is contributed by His246. Position 260 (Thr260) interacts with substrate.

It belongs to the tryptophan 2,3-dioxygenase family. In terms of assembly, homotetramer. Requires heme as cofactor.

It carries out the reaction L-tryptophan + O2 = N-formyl-L-kynurenine. Its pathway is amino-acid degradation; L-tryptophan degradation via kynurenine pathway; L-kynurenine from L-tryptophan: step 1/2. In terms of biological role, heme-dependent dioxygenase that catalyzes the oxidative cleavage of the L-tryptophan (L-Trp) pyrrole ring and converts L-tryptophan to N-formyl-L-kynurenine. Catalyzes the oxidative cleavage of the indole moiety. The polypeptide is Tryptophan 2,3-dioxygenase (Pseudomonas aeruginosa (strain UCBPP-PA14)).